A 504-amino-acid chain; its full sequence is Histidine ammonia-lyase (504 aa).

The 5-imidazolinone (Ala-Gly) cross-link spans 142-144 (ASG). S143 carries the 2,3-didehydroalanine (Ser) modification.

It belongs to the PAL/histidase family. Contains an active site 4-methylidene-imidazol-5-one (MIO), which is formed autocatalytically by cyclization and dehydration of residues Ala-Ser-Gly.

Its subcellular location is the cytoplasm. It catalyses the reaction L-histidine = trans-urocanate + NH4(+). It functions in the pathway amino-acid degradation; L-histidine degradation into L-glutamate; N-formimidoyl-L-glutamate from L-histidine: step 1/3. The chain is Histidine ammonia-lyase from Staphylococcus aureus (strain MSSA476).